Here is a 543-residue protein sequence, read N- to C-terminus: MRRRITFVQRPETPFSLDQAVLTPDALALHGIDGAREERATFSVDELPEELSDVLKQCHQLHVRWASERRYDAVAPFSSRVSPGLHVFYTPVDGSSEENKLKSLCALLKRAFDYGLKCKSPETLEESFITPPILSTRFASTAAFQYHSLLPTLDNLVAYIENKICSSSDEQCLRYAASIRSADSVDINYDSISHSLTVLGYWSQSPKNGWTDEIRRHAAGTDQVEVGLLGTEAATEPEDIKMGGLLAVVGKDDQLSMLSSGLPSEFGVAYGYGTDDSWAEPTLFSFPSRHQPLPEDATYSISFTSPTGLHPTMTISMPPSSLNSPPAPPDATCALHTYLTLPSTIFGDKYQLSTTDPLFLDSHNLVALHAVAGETDLEAPDWFVSRWGSNWLLELATPSESDQVPEEWNVTIPLHLRYLRPSESGYRSASVPWPVVFWACTAEDGTKMGVNPFDRVNLGWEGLFGTRTMFYQLHPSSDRLVEELEVPVLQLDDKGFFQSKAIELGTMIVIGLGSLWVLWKLGAIAWSSGTRPQRKSTKQKKSE.

Residues 1–503 (MRRRITFVQR…KGFFQSKAIE (503 aa)) are Lumenal-facing. The N-linked (GlcNAc...) asparagine glycan is linked to asparagine 409. The helical transmembrane segment at 504–524 (LGTMIVIGLGSLWVLWKLGAI) threads the bilayer. At 525-543 (AWSSGTRPQRKSTKQKKSE) the chain is on the cytoplasmic side.

The protein belongs to the PIGX family.

It is found in the endoplasmic reticulum membrane. Its pathway is glycolipid biosynthesis; glycosylphosphatidylinositol-anchor biosynthesis. Required for proper folding and/or the stability of a subset of proteins in the endoplasmic reticulum. Component of glycosylphosphatidylinositol-mannosyltransferase 1 which transfers the first of the 4 mannoses in the GPI-anchor precursors during GPI-anchor biosynthesis. Probably acts by stabilizing the mannosyltransferase gpi14. The polypeptide is Protein pbn1 (pbn1) (Aspergillus oryzae (strain ATCC 42149 / RIB 40) (Yellow koji mold)).